The sequence spans 606 residues: Diphthine--ammonia ligase (606 aa).

It in the N-terminal section; belongs to the Diphthine--ammonia ligase family. In the C-terminal section; belongs to the RutC family.

The protein localises to the cytoplasm. Its subcellular location is the nucleus. The enzyme catalyses diphthine-[translation elongation factor 2] + NH4(+) + ATP = diphthamide-[translation elongation factor 2] + AMP + diphosphate + H(+). The protein operates within protein modification; peptidyl-diphthamide biosynthesis. In terms of biological role, amidase that catalyzes the last step of diphthamide biosynthesis using ammonium and ATP. Diphthamide biosynthesis consists in the conversion of an L-histidine residue in the translation elongation factor eEF-2 (eft201 or eft202) to diphthamide. Has a role in meiosis. This is Diphthine--ammonia ligase (mug71) from Schizosaccharomyces pombe (strain 972 / ATCC 24843) (Fission yeast).